The following is a 126-amino-acid chain: MMTPTIPVALFDRLLVEGISPHELVRRKLMCLFNSCSVPGGETLPPLLTRGMPEWHEVNVGDKRVLNWFCRELRAAILRYEPSINMLKVSVKDAHHQTLALSLEAMLQDESEPLRLEIAYSNGRWR.

The protein belongs to the GpW/Gp25 family. IraD subfamily. Interacts with RssB.

It localises to the cytoplasm. Its function is as follows. Inhibits RpoS proteolysis by regulating RssB activity, thereby increasing the stability of the sigma stress factor RpoS during oxidative stress. Its effect on RpoS stability is due to its interaction with RssB, which probably blocks the interaction of RssB with RpoS, and the consequent delivery of the RssB-RpoS complex to the ClpXP protein degradation pathway. This is Anti-adapter protein IraD from Salmonella choleraesuis (strain SC-B67).